Consider the following 650-residue polypeptide: Acetyl-coenzyme A synthetase (650 aa).

CoA contacts are provided by residues 191–194 (RGGR), Thr-311, and Asn-335. ATP-binding positions include 387–389 (GEP), 411–416 (DTWWQT), Asp-500, and Arg-515. Ser-523 is a CoA binding site. Arg-526 is an ATP binding site. Mg(2+) is bound by residues Val-537, His-539, and Val-542. Arg-584 serves as a coordination point for CoA. Lys-609 carries the N6-acetyllysine modification.

This sequence belongs to the ATP-dependent AMP-binding enzyme family. Requires Mg(2+) as cofactor. Acetylated. Deacetylation by the SIR2-homolog deacetylase activates the enzyme.

The enzyme catalyses acetate + ATP + CoA = acetyl-CoA + AMP + diphosphate. Catalyzes the conversion of acetate into acetyl-CoA (AcCoA), an essential intermediate at the junction of anabolic and catabolic pathways. AcsA undergoes a two-step reaction. In the first half reaction, AcsA combines acetate with ATP to form acetyl-adenylate (AcAMP) intermediate. In the second half reaction, it can then transfer the acetyl group from AcAMP to the sulfhydryl group of CoA, forming the product AcCoA. The polypeptide is Acetyl-coenzyme A synthetase (Shewanella frigidimarina (strain NCIMB 400)).